A 578-amino-acid polypeptide reads, in one-letter code: Aspartate--tRNA ligase (578 aa).

Glu169 serves as a coordination point for L-aspartate. The tract at residues 191–194 (QTFK) is aspartate. Arg213 contacts L-aspartate. ATP-binding positions include 213 to 215 (RDE) and Gln222. L-aspartate is bound at residue His440. ATP is bound at residue Glu474. Arg481 provides a ligand contact to L-aspartate. 526-529 (GLDR) serves as a coordination point for ATP.

This sequence belongs to the class-II aminoacyl-tRNA synthetase family. Type 1 subfamily. As to quaternary structure, homodimer.

The protein localises to the cytoplasm. It catalyses the reaction tRNA(Asp) + L-aspartate + ATP = L-aspartyl-tRNA(Asp) + AMP + diphosphate. In terms of biological role, catalyzes the attachment of L-aspartate to tRNA(Asp) in a two-step reaction: L-aspartate is first activated by ATP to form Asp-AMP and then transferred to the acceptor end of tRNA(Asp). This Ureaplasma parvum serovar 3 (strain ATCC 700970) protein is Aspartate--tRNA ligase.